A 502-amino-acid polypeptide reads, in one-letter code: 2,3-bisphosphoglycerate-independent phosphoglycerate mutase (502 aa).

Positions 13 and 63 each coordinate Mn(2+). S63 acts as the Phosphoserine intermediate in catalysis. Substrate contacts are provided by residues H117, 146–147 (RD), R177, R183, 251–254 (RSDR), and K324. Residues D389, H393, D430, H431, and H448 each coordinate Mn(2+).

Belongs to the BPG-independent phosphoglycerate mutase family. In terms of assembly, monomer. Mn(2+) serves as cofactor.

It carries out the reaction (2R)-2-phosphoglycerate = (2R)-3-phosphoglycerate. It participates in carbohydrate degradation; glycolysis; pyruvate from D-glyceraldehyde 3-phosphate: step 3/5. Catalyzes the interconversion of 2-phosphoglycerate and 3-phosphoglycerate. This chain is 2,3-bisphosphoglycerate-independent phosphoglycerate mutase, found in Ureaplasma urealyticum serovar 10 (strain ATCC 33699 / Western).